We begin with the raw amino-acid sequence, 1109 residues long: Receptor-like protein kinase (1109 aa).

A signal peptide spans 1–20 (MKVAVNTFLLFLCSTSSIYA). Topologically, residues 21 to 764 (AFALNSDGAA…GGLSTLGIAM (744 aa)) are extracellular. Residues asparagine 50, asparagine 74, and asparagine 114 are each glycosylated (N-linked (GlcNAc...) asparagine). LRR repeat units lie at residues 69 to 92 (FVDT…SHLK), 93 to 115 (HLKK…LGNC), 117 to 140 (LLEH…GALQ), 141 to 162 (NLRN…SLLS), 165 to 187 (HLET…IGNM), and 189 to 209 (ELTT…SSLG). Asparagine 144, asparagine 177, and asparagine 186 each carry an N-linked (GlcNAc...) asparagine glycan. Asparagine 210 is a glycosylation site (N-linked (GlcNAc...) asparagine). LRR repeat units follow at residues 213–236 (TLQE…NNLE), 237–258 (NLVY…DFVS), 261–284 (QIDT…GNCT), 309–331 (KLDT…LGKC), 333–355 (SMID…LGML), 357–378 (QLQY…SIWK), 381–404 (SLQS…TELK), 405–427 (QLVS…LGAN), 429–451 (SLEV…LCSQ), 453–476 (KLKR…GGCS), 477–499 (TLER…VEKQ), 500–523 (NLLF…GNLK), 524–546 (NVTA…LGSL), 548–569 (KLEH…ELSN), 572–595 (KLSE…GSLT), 596–618 (ELTK…LFQS), 620–642 (KLLN…GALQ), 643–666 (ALRS…GKLK), 667–689 (MLEE…STIQ), and 690–710 (SLTF…PSLT). Asparagine 245 and asparagine 282 each carry an N-linked (GlcNAc...) asparagine glycan. Residues asparagine 367, asparagine 391, and asparagine 427 are each glycosylated (N-linked (GlcNAc...) asparagine). Residues asparagine 510, asparagine 524, asparagine 553, and asparagine 584 are each glycosylated (N-linked (GlcNAc...) asparagine). Asparagine 648, asparagine 677, and asparagine 695 each carry an N-linked (GlcNAc...) asparagine glycan. A helical membrane pass occupies residues 765–785 (IVLGALLFIICLFLFSAFLFL). Topologically, residues 786–1109 (HCKKSVQEIA…YSSSVRNKSK (324 aa)) are cytoplasmic. A Protein kinase domain is found at 816 to 1096 (LNDKYVIGKG…DVVKQLTRWS (281 aa)). ATP-binding positions include 822–830 (IGKGAHGTI) and lysine 845. An LRR 27 repeat occupies 827 to 850 (HGTIYKATLSPDKVYAVKKLVFTG). The Proton acceptor role is filled by aspartate 942. The stretch at 958–981 (ISDFGIAKLLDQSATSIPSNTVQG) is one LRR 28 repeat.

It belongs to the protein kinase superfamily. Ser/Thr protein kinase family. In terms of tissue distribution, INRPK1 and INRPK1b are expressed in leaves, cotyledons, shoot tips and roots from induced and vegetative plants. The highest concentrations of INRPK1 are found in vegetative roots, and the lowest concentrations in vegetative cotyledons. INRPK1b is more abundant in roots than other tissues. INRPK1a is expressed in vegetative roots. INRPK1c is expressed in cotyledons.

It is found in the cell membrane. It localises to the secreted. The enzyme catalyses L-seryl-[protein] + ATP = O-phospho-L-seryl-[protein] + ADP + H(+). It carries out the reaction L-threonyl-[protein] + ATP = O-phospho-L-threonyl-[protein] + ADP + H(+). In terms of biological role, possible role in short-day photoperiod floral induction. The polypeptide is Receptor-like protein kinase (INRPK1) (Ipomoea nil (Japanese morning glory)).